The chain runs to 108 residues: MLGYGGLTYTLHDSKPCLLIFAYLALKWRIIIGRKDHSHQRKCRLTVFSPFIFTPNGSLLLWSEVVDDIKRSSNFLGRPSPDHFSNHLAASVKQGLDVEVVCRQNNFV.

This is an uncharacterized protein from Saccharomyces cerevisiae (strain ATCC 204508 / S288c) (Baker's yeast).